Here is a 440-residue protein sequence, read N- to C-terminus: Beta-1,3-galactosyl-O-glycosyl-glycoprotein beta-1,6-N-acetylglucosaminyltransferase 3 (440 aa).

The Cytoplasmic portion of the chain corresponds to 1–12 (MKMTGWKKKLCR). Residues 13 to 30 (GHHLWALGCYMLLAVVAL) traverse the membrane as a helical; Signal-anchor for type II membrane protein segment. Residues 31–440 (RLSLRLKCDV…RHKAIYGTEL (410 aa)) are Lumenal-facing. Cystine bridges form between cysteine 73/cysteine 230, cysteine 164/cysteine 384, cysteine 185/cysteine 212, and cysteine 393/cysteine 425. N-linked (GlcNAc...) asparagine glycosylation is present at asparagine 108.

Belongs to the glycosyltransferase 14 family. N-glycosylated.

It is found in the golgi apparatus membrane. The enzyme catalyses a 3-O-[beta-D-galactosyl-(1-&gt;3)-N-acetyl-alpha-D-galactosaminyl]-L-seryl-[protein] + UDP-N-acetyl-alpha-D-glucosamine = 3-O-{beta-D-galactosyl-(1-&gt;3)-[N-acetyl-beta-D-glucosaminyl-(1-&gt;6)]-N-acetyl-alpha-D-galactosaminyl}-L-seryl-[protein] + UDP + H(+). It catalyses the reaction a 3-O-[beta-D-galactosyl-(1-&gt;3)-N-acetyl-alpha-D-galactosaminyl]-L-threonyl-[protein] + UDP-N-acetyl-alpha-D-glucosamine = a 3-O-{beta-D-galactosyl-(1-&gt;3)-[N-acetyl-beta-D-glucosaminyl-(1-&gt;6)]-N-acetyl-alpha-D-galactosaminyl}-L-threonyl-[protein] + UDP + H(+). It carries out the reaction a beta-D-Gal-(1-&gt;4)-beta-D-GlcNAc-(1-&gt;3)-beta-D-Gal-(1-&gt;4)-beta-D-GlcNAc derivative + UDP-N-acetyl-alpha-D-glucosamine = a beta-D-Gal-(1-&gt;4)-beta-D-GlcNAc-(1-&gt;3)-[beta-D-GlcNAc-(1-&gt;6)]-beta-D-Gal-(1-&gt;4)-N-acetyl-beta-D-glucosaminyl derivative + UDP + H(+). The catalysed reaction is 3-O-[N-acetyl-beta-D-glucosaminyl-(1-&gt;3)-N-acetyl-alpha-D-galactosaminyl]-L-seryl-[protein] + UDP-N-acetyl-alpha-D-glucosamine = 3-O-[N-acetyl-beta-D-glucosaminyl-(1-&gt;3)-[N-acetyl-beta-D-glucosaminyl-(1-&gt;6)]-N-acetyl-alpha-D-galactosaminyl]-L-seryl-[protein] + UDP + H(+). The enzyme catalyses a 3-O-[N-acetyl-beta-D-glucosaminyl-(1-&gt;3)-N-acetyl-alpha-D-galactosaminyl]-L-threonyl-[protein] + UDP-N-acetyl-alpha-D-glucosamine = 3-O-[N-acetyl-beta-D-glucosaminyl-(1-&gt;3)-[N-acetyl-beta-D-glucosaminyl-(1-&gt;6)]-N-acetyl-alpha-D-galactosaminyl]-L-threonyl-[protein] + UDP + H(+). The protein operates within protein modification; protein glycosylation. In terms of biological role, glycosyltransferase that can synthesize all known mucin beta 6 N-acetylglucosaminides. Mediates core 2 and core 4 O-glycan branching, 2 important steps in mucin-type biosynthesis. Also has I-branching enzyme activity by converting linear into branched poly-N-acetyllactosaminoglycans, leading to introduce the blood group I antigen during embryonic development. The chain is Beta-1,3-galactosyl-O-glycosyl-glycoprotein beta-1,6-N-acetylglucosaminyltransferase 3 (GCNT3) from Ovis aries (Sheep).